A 349-amino-acid polypeptide reads, in one-letter code: Phospho-N-acetylmuramoyl-pentapeptide-transferase (349 aa).

The next 10 membrane-spanning stretches (helical) occupy residues 13–33, 69–89, 91–111, 129–149, 165–185, 197–217, 228–248, 252–272, 278–298, and 327–347; these read LFFS…SLGV, GGGV…LPWG, FSTW…WYDD, FMVQ…IYGS, LSLP…VAII, LDGL…FVAL, VAYV…YNGF, LFMG…CAVM, ILVV…LQVL, and IVMR…AAVL.

This sequence belongs to the glycosyltransferase 4 family. MraY subfamily. It depends on Mg(2+) as a cofactor.

The protein localises to the cell inner membrane. It catalyses the reaction UDP-N-acetyl-alpha-D-muramoyl-L-alanyl-gamma-D-glutamyl-meso-2,6-diaminopimeloyl-D-alanyl-D-alanine + di-trans,octa-cis-undecaprenyl phosphate = di-trans,octa-cis-undecaprenyl diphospho-N-acetyl-alpha-D-muramoyl-L-alanyl-D-glutamyl-meso-2,6-diaminopimeloyl-D-alanyl-D-alanine + UMP. The protein operates within cell wall biogenesis; peptidoglycan biosynthesis. Functionally, catalyzes the initial step of the lipid cycle reactions in the biosynthesis of the cell wall peptidoglycan: transfers peptidoglycan precursor phospho-MurNAc-pentapeptide from UDP-MurNAc-pentapeptide onto the lipid carrier undecaprenyl phosphate, yielding undecaprenyl-pyrophosphoryl-MurNAc-pentapeptide, known as lipid I. This is Phospho-N-acetylmuramoyl-pentapeptide-transferase from Chlamydia pneumoniae (Chlamydophila pneumoniae).